The chain runs to 267 residues: Adenosine 5'-phosphosulfate reductase (267 aa).

Residues 1 to 29 (MPPFATIPATERNSAAQHQDPSPMSQPFD) are disordered. The span at 11 to 25 (ERNSAAQHQDPSPMS) shows a compositional bias: polar residues. Residues C139, C140, C228, and C231 each contribute to the [4Fe-4S] cluster site. The active-site Nucleophile; cysteine thiosulfonate intermediate is C256.

It belongs to the PAPS reductase family. CysH subfamily. [4Fe-4S] cluster serves as cofactor.

The protein localises to the cytoplasm. It catalyses the reaction [thioredoxin]-disulfide + sulfite + AMP + 2 H(+) = adenosine 5'-phosphosulfate + [thioredoxin]-dithiol. It functions in the pathway sulfur metabolism; hydrogen sulfide biosynthesis; sulfite from sulfate. Its function is as follows. Catalyzes the formation of sulfite from adenosine 5'-phosphosulfate (APS) using thioredoxin as an electron donor. The protein is Adenosine 5'-phosphosulfate reductase of Pseudomonas aeruginosa (strain LESB58).